The sequence spans 782 residues: Pyridoxal-dependent decarboxylase domain-containing protein 1 (782 aa).

A compositionally biased stretch (basic and acidic residues) spans 26–48; sequence ILEDNQRPSEEEKDGKKYTRKDI. 4 disordered regions span residues 26 to 56, 673 to 695, 702 to 721, and 726 to 782; these read ILED…QGSG, QTTG…AGQK, RNSD…EVES, and PMPE…DSLR. 2 stretches are compositionally biased toward polar residues: residues 703–714 and 747–782; these read NSDAMSETSSIS and AEQS…DSLR.

Belongs to the group II decarboxylase family. Pyridoxal 5'-phosphate serves as cofactor.

The chain is Pyridoxal-dependent decarboxylase domain-containing protein 1 (pdxdc1) from Xenopus laevis (African clawed frog).